Reading from the N-terminus, the 61-residue chain is Protein YncO (61 aa).

A helical membrane pass occupies residues 18 to 38 (HVFLYVFYIFLFLVLFIMTIY).

The protein resides in the cell inner membrane. In Escherichia coli (strain K12), this protein is Protein YncO.